Consider the following 113-residue polypeptide: Putative pterin-4-alpha-carbinolamine dehydratase (113 aa).

This sequence belongs to the pterin-4-alpha-carbinolamine dehydratase family.

The enzyme catalyses (4aS,6R)-4a-hydroxy-L-erythro-5,6,7,8-tetrahydrobiopterin = (6R)-L-erythro-6,7-dihydrobiopterin + H2O. The protein is Putative pterin-4-alpha-carbinolamine dehydratase of Nitrosomonas europaea (strain ATCC 19718 / CIP 103999 / KCTC 2705 / NBRC 14298).